Consider the following 155-residue polypeptide: Troponin C, body wall muscle (155 aa).

Valine 1 carries the post-translational modification N-acetylvaline. 4 consecutive EF-hand domains span residues 7-43 (DEKSQFRAAFDIFVADAKDGTISSKELGKVMKMLGQN), 44-79 (PTEKDLQEMIEEVDIDGSGTIDFEEFCLMMYRQMQA), 88-121 (REEKELSEAFRLFDLDGDGIGDELKAALDGTGEN), and 122-155 (VETWEVDEMMADGDKNHDSQIDYEEWVTMMKFVQ). Aspartate 57, aspartate 59, serine 61, threonine 63, and glutamate 68 together coordinate Ca(2+). Ca(2+)-binding residues include aspartate 135, asparagine 137, aspartate 139, glutamine 141, and glutamate 146.

The protein belongs to the troponin C family.

Its function is as follows. Troponin is the central regulatory protein of muscle contraction. Tn consists of three components: Tn-I which is the inhibitor of actomyosin ATPase, Tn-T which contains the binding site for tropomyosin and Tn-C. The binding of calcium to Tn-C abolishes the inhibitory action of Tn on actin filaments. This is Troponin C, body wall muscle from Halocynthia roretzi (Sea squirt).